A 120-amino-acid chain; its full sequence is Probable early E4 13 kDa protein (120 aa).

This is Probable early E4 13 kDa protein from Human adenovirus A serotype 12 (HAdV-12).